A 322-amino-acid polypeptide reads, in one-letter code: Ferredoxin--NADP reductase (322 aa).

The FAD site is built by serine 14, aspartate 33, glutamine 41, tyrosine 46, alanine 86, phenylalanine 120, aspartate 278, and serine 319.

This sequence belongs to the ferredoxin--NADP reductase type 2 family. In terms of assembly, homodimer. It depends on FAD as a cofactor.

It carries out the reaction 2 reduced [2Fe-2S]-[ferredoxin] + NADP(+) + H(+) = 2 oxidized [2Fe-2S]-[ferredoxin] + NADPH. In Salinispora arenicola (strain CNS-205), this protein is Ferredoxin--NADP reductase.